Here is a 109-residue protein sequence, read N- to C-terminus: Cytochrome c (109 aa).

Positions 25, 28, 29, and 88 each coordinate heme c.

Belongs to the cytochrome c family. Binds 1 heme c group covalently per subunit.

It is found in the mitochondrion intermembrane space. Functionally, electron carrier protein. The oxidized form of the cytochrome c heme group can accept an electron from the heme group of the cytochrome c1 subunit of cytochrome reductase. Cytochrome c then transfers this electron to the cytochrome oxidase complex, the final protein carrier in the mitochondrial electron-transport chain. This chain is Cytochrome c, found in Tetrahymena pyriformis.